The following is a 457-amino-acid chain: Aromatic amino acid transport protein AroP (457 aa).

Topologically, residues methionine 1–arginine 18 are cytoplasmic. The helical transmembrane segment at histidine 19–serine 39 threads the bilayer. Residues valine 40–glutamine 42 are Periplasmic-facing. A helical membrane pass occupies residues serine 43 to methionine 63. The Cytoplasmic portion of the chain corresponds to arginine 64 to asparagine 98. The chain crosses the membrane as a helical span at residues tyrosine 99–glutamine 119. At phenylalanine 120–glutamate 124 the chain is on the periplasmic side. Residues isoleucine 125 to asparagine 145 form a helical membrane-spanning segment. Topologically, residues valine 146–lysine 147 are cytoplasmic. The helical transmembrane segment at valine 148–isoleucine 168 threads the bilayer. The Periplasmic portion of the chain corresponds to isoleucine 169–glutamine 192. Residues glycine 193–serine 213 traverse the membrane as a helical segment. At phenylalanine 214–asparagine 239 the chain is on the cytoplasmic side. Residues glutamine 240–methionine 260 traverse the membrane as a helical segment. The Periplasmic segment spans residues proline 261–leucine 279. A helical transmembrane segment spans residues glycine 280–tyrosine 300. Residues asparagine 301 to arginine 330 lie on the Cytoplasmic side of the membrane. The helical transmembrane segment at glycine 331–asparagine 351 threads the bilayer. The Periplasmic segment spans residues tyrosine 352–phenylalanine 359. Residues glycine 360–alanine 380 traverse the membrane as a helical segment. At histidine 381–tyrosine 402 the chain is on the cytoplasmic side. Residues proline 403–threonine 423 traverse the membrane as a helical segment. Residues proline 424 to methionine 426 lie on the Periplasmic side of the membrane. Residues alanine 427–lysine 447 traverse the membrane as a helical segment. Topologically, residues glutamate 448 to histidine 457 are cytoplasmic.

Belongs to the amino acid-polyamine-organocation (APC) superfamily. Amino acid transporter (AAT) (TC 2.A.3.1) family.

It is found in the cell inner membrane. It carries out the reaction L-phenylalanine(in) + H(+)(in) = L-phenylalanine(out) + H(+)(out). It catalyses the reaction L-tryptophan(in) + H(+)(in) = L-tryptophan(out) + H(+)(out). The enzyme catalyses L-tyrosine(in) + H(+)(in) = L-tyrosine(out) + H(+)(out). Its activity is regulated as follows. Strong, mutual inhibition of uptake by tyrosine, phenylalanine, and tryptophan. Transport is also inhibited by the aromatic analogs p-fluorophenylalanine, beta-2-thienylalanine and 5-methyltryptophan. In terms of biological role, permease that is involved in the active transport across the cytoplasmic membrane of all three aromatic amino acids, phenylalanine, tyrosine and tryptophan. This Escherichia coli (strain K12) protein is Aromatic amino acid transport protein AroP.